Reading from the N-terminus, the 214-residue chain is Osteoclast-stimulating factor 1 (214 aa).

N-acetylserine is present on Ser2. One can recognise an SH3 domain in the interval 12-71 (GQVKVFRALYTFEPRTPDELYFEEGDIIYITDMSDTNWWKGTSKGRTGLIPSNYVAEQAE). 3 ANK repeats span residues 72-101 (SIDN…GVNG), 105-135 (AGST…ELNQ), and 139-168 (LGDT…RTDL). Thr200 bears the Phosphothreonine mark. Phosphoserine occurs at positions 202 and 213.

Interacts with SRC and SMN1. Interacts with FASLG.

The protein localises to the cytoplasm. In terms of biological role, induces bone resorption, acting probably through a signaling cascade which results in the secretion of factor(s) enhancing osteoclast formation and activity. The sequence is that of Osteoclast-stimulating factor 1 (OSTF1) from Sus scrofa (Pig).